Here is a 249-residue protein sequence, read N- to C-terminus: Small ribosomal subunit protein uS4m (249 aa).

The S4 RNA-binding domain maps to Arg133–Gln193.

The protein belongs to the universal ribosomal protein uS4 family.

It localises to the mitochondrion. The chain is Small ribosomal subunit protein uS4m (RPS4) from Reclinomonas americana.